Consider the following 307-residue polypeptide: Transmembrane and coiled-coil domain-containing protein 5B (307 aa).

Positions 17 to 207 (FASSLEAVKQ…LEKQISKAQD (191 aa)) form a coiled coil. Residues 243-265 (YFQYLTFMVLVFIRLLAYVIFHL) traverse the membrane as a helical segment.

Belongs to the TMCO5 family.

The protein localises to the membrane. The protein is Transmembrane and coiled-coil domain-containing protein 5B (TMCO5B) of Homo sapiens (Human).